Here is a 352-residue protein sequence, read N- to C-terminus: Protein RecA (352 aa).

Position 65-72 (glycine 65–threonine 72) interacts with ATP.

It belongs to the RecA family.

The protein resides in the cytoplasm. Its function is as follows. Can catalyze the hydrolysis of ATP in the presence of single-stranded DNA, the ATP-dependent uptake of single-stranded DNA by duplex DNA, and the ATP-dependent hybridization of homologous single-stranded DNAs. It interacts with LexA causing its activation and leading to its autocatalytic cleavage. In Pseudomonas fluorescens (strain SBW25), this protein is Protein RecA.